Consider the following 1911-residue polypeptide: Protein TIC 214 (1911 aa).

A run of 6 helical transmembrane segments spans residues 41–61, 81–103, 108–128, 147–167, 195–215, and 238–258; these read IINS…FSIG, ISAT…YAPL, GKPH…FFWN, FNIQ…HFIL, IGWL…LFWI, and IFSI…PLPI. 3 disordered regions span residues 265-299, 798-817, and 1599-1647; these read ETSE…STEE, DSEE…KEEN, and NQNQ…RKKK. A compositionally biased stretch (acidic residues) spans 268 to 297; the sequence is ETEESEENEEESDIEITSEPKEQDEEEGST. Basic and acidic residues-rich tracts occupy residues 1603–1615 and 1623–1635; these read QEKK…RDLG and QKQK…EKNY.

It belongs to the TIC214 family. As to quaternary structure, part of the Tic complex.

Its subcellular location is the plastid. It is found in the chloroplast inner membrane. In terms of biological role, involved in protein precursor import into chloroplasts. May be part of an intermediate translocation complex acting as a protein-conducting channel at the inner envelope. The chain is Protein TIC 214 from Lemna minor (Common duckweed).